We begin with the raw amino-acid sequence, 171 residues long: Co-chaperone protein HscB homolog (171 aa).

The J domain maps to 2–74; it reads NHFELFGLPN…VTRAEYILSE (73 aa).

The protein belongs to the HscB family. As to quaternary structure, interacts with HscA and stimulates its ATPase activity.

In terms of biological role, co-chaperone involved in the maturation of iron-sulfur cluster-containing proteins. Seems to help targeting proteins to be folded toward HscA. This Aliivibrio salmonicida (strain LFI1238) (Vibrio salmonicida (strain LFI1238)) protein is Co-chaperone protein HscB homolog.